A 125-amino-acid chain; its full sequence is Protein ApaG (125 aa).

The ApaG domain maps to 1–125 (MNDTPRVCVQ…FRLAIATHIH (125 aa)).

This is Protein ApaG from Erwinia tasmaniensis (strain DSM 17950 / CFBP 7177 / CIP 109463 / NCPPB 4357 / Et1/99).